Here is a 267-residue protein sequence, read N- to C-terminus: Putative carbamate hydrolase RutD (267 aa).

In terms of domain architecture, AB hydrolase-1 spans 14–115 (PTLVLSAGLG…EKLVVVNGWP (102 aa)).

Belongs to the AB hydrolase superfamily. Hydrolase RutD family.

The enzyme catalyses carbamate + 2 H(+) = NH4(+) + CO2. Involved in pyrimidine catabolism. May facilitate the hydrolysis of carbamate, a reaction that can also occur spontaneously. In Serratia proteamaculans (strain 568), this protein is Putative carbamate hydrolase RutD.